Reading from the N-terminus, the 387-residue chain is 3-ketoacyl-CoA thiolase (387 aa).

The Acyl-thioester intermediate role is filled by C91. Residues H343 and C373 each act as proton acceptor in the active site.

Belongs to the thiolase-like superfamily. Thiolase family. In terms of assembly, heterotetramer of two alpha chains (FadB) and two beta chains (FadA).

It localises to the cytoplasm. It catalyses the reaction an acyl-CoA + acetyl-CoA = a 3-oxoacyl-CoA + CoA. Its pathway is lipid metabolism; fatty acid beta-oxidation. In terms of biological role, catalyzes the final step of fatty acid oxidation in which acetyl-CoA is released and the CoA ester of a fatty acid two carbons shorter is formed. The polypeptide is 3-ketoacyl-CoA thiolase (Shewanella baltica (strain OS155 / ATCC BAA-1091)).